A 348-amino-acid polypeptide reads, in one-letter code: tRNA N6-adenosine threonylcarbamoyltransferase (348 aa).

His-111 and His-115 together coordinate Fe cation. Substrate is bound by residues 134–138, Asp-167, Gly-180, and Asn-277; that span reads LISGG. Asp-305 contacts Fe cation.

It belongs to the KAE1 / TsaD family. Fe(2+) is required as a cofactor.

It is found in the cytoplasm. The enzyme catalyses L-threonylcarbamoyladenylate + adenosine(37) in tRNA = N(6)-L-threonylcarbamoyladenosine(37) in tRNA + AMP + H(+). Required for the formation of a threonylcarbamoyl group on adenosine at position 37 (t(6)A37) in tRNAs that read codons beginning with adenine. Is involved in the transfer of the threonylcarbamoyl moiety of threonylcarbamoyl-AMP (TC-AMP) to the N6 group of A37, together with TsaE and TsaB. TsaD likely plays a direct catalytic role in this reaction. The chain is tRNA N6-adenosine threonylcarbamoyltransferase from Haemophilus ducreyi (strain 35000HP / ATCC 700724).